Consider the following 245-residue polypeptide: MKDIIVIKIGGVASQQLSGDFLSQIKNWQDAGKQLVIVHGGGFAINKLMEENQVPVKKINGLRVTSKDDMVLVSHALLDLVGKNLQEKLRQAGVSCQQLKSDIKHVVAADYLDKDTYGYVGDVTHINKRVIEEFLENRQIPILASLGYSKEGDMLNINADYLATAVAVALAADKLILMTNVKGVLENGAVLEKITSHQVQEKIDTAVITAGMIPKIESAAKTVAAGVGQVLIGDNLLTGTLITAD.

Substrate contacts are provided by residues 41–42 (GG), Arg-63, and Asn-156.

Belongs to the acetylglutamate kinase family. ArgB subfamily.

The protein resides in the cytoplasm. The catalysed reaction is N-acetyl-L-glutamate + ATP = N-acetyl-L-glutamyl 5-phosphate + ADP. Its pathway is amino-acid biosynthesis; L-arginine biosynthesis; N(2)-acetyl-L-ornithine from L-glutamate: step 2/4. Its function is as follows. Catalyzes the ATP-dependent phosphorylation of N-acetyl-L-glutamate. In Streptococcus mutans serotype c (strain ATCC 700610 / UA159), this protein is Acetylglutamate kinase.